Reading from the N-terminus, the 1077-residue chain is MTNFRLNVLAYSVMLGLTASVAYAEPTNQPTNQPTNQPTNQPTNQPTNQPTNQPTNQPTNQPTNQPTNQNSNASEQLEQINVSGSTENTDTKAPPKIAETVKTAKKLEKEQAQDVKDLVRYETGITVVEAGRFGNSGFAVRGVEENRVAVQIDGLHQAETISSQGFKELFEGYGNFNNTRNSAEIETLKQVTIRKGADSLKSGSGALGGSVSLDTKDARDYLLNKNYYASYKRGYNTADNQNLNTLTLGGRYKYFDAIAVLTSRKGHELENFGYKNYNDKIQGKTREKADPYRRTQDSALLKIGFQPTENHRFSVVADLYKQTSKGHDFSYTLKPNTQYMTYDEKELRHTNDKVERKNIAFVYENFTETPFWDTLKITYSHQKITTSARTDDYCDGNDKCALAGNPLGMKYNQDNQLVGKDGKSAKYQDINKTQVIKERLPFTKPNGRWRFHKVDWDALKKKYPGVPIYASCLEEDNDPSEFCTYEVKTTKKENTFEINGKRYDLLSEADKNVISDEQRLPTNVSYLFSCDGLNCDKKTILGFKKRRNLLKIFLFEVIEKRCQKYGKTKVKANDQLSGPYLFMPNKKGYQANLWSQRDLTSETKQINLDLTKHLELGKTQHDLSYGGLWSEMEKSMTNLAGDTPLNVKWWAQYPHNCATFLPPSTMTPNAKPTLNPERTSTLCNNVNVFSFLIPVKTKTGALYFINDFRVNNYVAFNLGYRYDRVKYEPEYIPGKTPKIPDDMVTNLYIKTPEFDASKADSDPDELSKKEANAAANIKEIAQPKKFSASSYSFGTTLDPLNWLRLQAKYSKGFRAPTSDEIYFTFKHPDFSIQPNRDLQPETAKTKELSLTVHNDMGYITTSVFDTRYQNFIDLSYQGRRDVHGHSKLIPFHFYQNVNRPNAKVTGFEIASQISLGNITKLFNGFSLSYKYTYQKGRINGNIPMNAIQPRTAVYGVSYVHPDDKYGLDLYISHASAKNAEDTYNMFYKEEGKTDSTIKWRSKSYTTIDLLGYIKPIKNLTLRAGVYNLTNRKYITWDSARSIRPFGTSNMINQDTGLGINRFYAPERNYRMSVQFEF.

The signal sequence occupies residues 1–24 (MTNFRLNVLAYSVMLGLTASVAYA). The disordered stretch occupies residues 25-72 (EPTNQPTNQPTNQPTNQPTNQPTNQPTNQPTNQPTNQPTNQPTNQNSN). Tandem repeats lie at residues 26 to 29 (PTNQ), 30 to 33 (PTNQ), 34 to 37 (PTNQ), 38 to 41 (PTNQ), 42 to 45 (PTNQ), 46 to 49 (PTNQ), 50 to 53 (PTNQ), 54 to 57 (PTNQ), 58 to 61 (PTNQ), 62 to 65 (PTNQ), and 66 to 69 (PTNQ). Residues 26-69 (PTNQPTNQPTNQPTNQPTNQPTNQPTNQPTNQPTNQPTNQPTNQ) form an 11 X 4 AA tandem repeats of P-T-N-Q region. Residues 26–70 (PTNQPTNQPTNQPTNQPTNQPTNQPTNQPTNQPTNQPTNQPTNQN) show a composition bias toward low complexity. The short motif at 78 to 85 (EQINVSGS) is the TonB box element. The region spanning 89-216 (TDTKAPPKIA…LGGSVSLDTK (128 aa)) is the TBDR plug domain. The TBDR beta-barrel domain occupies 224-1077 (NKNYYASYKR…NYRMSVQFEF (854 aa)). The TonB C-terminal box motif lies at 1060–1077 (NRFYAPERNYRMSVQFEF).

It belongs to the TonB-dependent receptor family. Hemoglobin/haptoglobin binding protein subfamily.

Its subcellular location is the cell outer membrane. In terms of biological role, acts as a receptor for hemoglobin or the hemoglobin/haptoglobin complex of the human host and is required for heme uptake. This Haemophilus influenzae protein is Hemoglobin and hemoglobin-haptoglobin-binding protein A (hgpA).